A 289-amino-acid chain; its full sequence is Phosphatidylglycerol--prolipoprotein diacylglyceryl transferase (289 aa).

7 helical membrane passes run 17–37, 57–77, 89–109, 121–141, 174–194, 200–220, and 235–255; these read LAVR…ILLG, MLFY…IFFY, IFAV…VIAA, WLVV…AGRI, QLYE…IYSA, GAVS…AEFF, and ISMG…MLVW. A 1,2-diacyl-sn-glycero-3-phospho-(1'-sn-glycerol) is bound at residue Arg-140.

The protein belongs to the Lgt family.

It is found in the cell inner membrane. It catalyses the reaction L-cysteinyl-[prolipoprotein] + a 1,2-diacyl-sn-glycero-3-phospho-(1'-sn-glycerol) = an S-1,2-diacyl-sn-glyceryl-L-cysteinyl-[prolipoprotein] + sn-glycerol 1-phosphate + H(+). The protein operates within protein modification; lipoprotein biosynthesis (diacylglyceryl transfer). Functionally, catalyzes the transfer of the diacylglyceryl group from phosphatidylglycerol to the sulfhydryl group of the N-terminal cysteine of a prolipoprotein, the first step in the formation of mature lipoproteins. This Nitrosospira multiformis (strain ATCC 25196 / NCIMB 11849 / C 71) protein is Phosphatidylglycerol--prolipoprotein diacylglyceryl transferase.